Reading from the N-terminus, the 513-residue chain is ATP synthase subunit alpha (513 aa).

169–176 (GDRQTGKT) is a binding site for ATP.

Belongs to the ATPase alpha/beta chains family. As to quaternary structure, F-type ATPases have 2 components, CF(1) - the catalytic core - and CF(0) - the membrane proton channel. CF(1) has five subunits: alpha(3), beta(3), gamma(1), delta(1), epsilon(1). CF(0) has three main subunits: a(1), b(2) and c(9-12). The alpha and beta chains form an alternating ring which encloses part of the gamma chain. CF(1) is attached to CF(0) by a central stalk formed by the gamma and epsilon chains, while a peripheral stalk is formed by the delta and b chains.

Its subcellular location is the cell membrane. It carries out the reaction ATP + H2O + 4 H(+)(in) = ADP + phosphate + 5 H(+)(out). Its function is as follows. Produces ATP from ADP in the presence of a proton gradient across the membrane. The alpha chain is a regulatory subunit. This chain is ATP synthase subunit alpha, found in Polynucleobacter asymbioticus (strain DSM 18221 / CIP 109841 / QLW-P1DMWA-1) (Polynucleobacter necessarius subsp. asymbioticus).